We begin with the raw amino-acid sequence, 486 residues long: Glutamyl-tRNA(Gln) amidotransferase subunit A (486 aa).

Catalysis depends on charge relay system residues lysine 75 and serine 150. The active-site Acyl-ester intermediate is the serine 174.

This sequence belongs to the amidase family. GatA subfamily. As to quaternary structure, heterotrimer of A, B and C subunits.

It carries out the reaction L-glutamyl-tRNA(Gln) + L-glutamine + ATP + H2O = L-glutaminyl-tRNA(Gln) + L-glutamate + ADP + phosphate + H(+). In terms of biological role, allows the formation of correctly charged Gln-tRNA(Gln) through the transamidation of misacylated Glu-tRNA(Gln) in organisms which lack glutaminyl-tRNA synthetase. The reaction takes place in the presence of glutamine and ATP through an activated gamma-phospho-Glu-tRNA(Gln). In Nostoc sp. (strain PCC 7120 / SAG 25.82 / UTEX 2576), this protein is Glutamyl-tRNA(Gln) amidotransferase subunit A.